The following is a 250-amino-acid chain: Hydroxyacylglutathione hydrolase (250 aa).

Zn(2+) is bound by residues His52, His54, Asp56, His57, His107, Asp128, and His166.

This sequence belongs to the metallo-beta-lactamase superfamily. Glyoxalase II family. As to quaternary structure, monomer. The cofactor is Zn(2+).

It catalyses the reaction an S-(2-hydroxyacyl)glutathione + H2O = a 2-hydroxy carboxylate + glutathione + H(+). Its pathway is secondary metabolite metabolism; methylglyoxal degradation; (R)-lactate from methylglyoxal: step 2/2. In terms of biological role, thiolesterase that catalyzes the hydrolysis of S-D-lactoyl-glutathione to form glutathione and D-lactic acid. The protein is Hydroxyacylglutathione hydrolase of Neisseria gonorrhoeae (strain NCCP11945).